The chain runs to 232 residues: Probable ADP-ribosylation factor GTPase-activating protein AGD15 (232 aa).

The Arf-GAP domain occupies 16 to 130 (SKILEALLKH…RWVSPGAIQP (115 aa)). The segment at 31 to 54 (CADCRSKAPRWASVNLGIFICMQC) adopts a C4-type zinc-finger fold. The interval 203 to 232 (PNQKNENFSSEVNQNRRTTIAPPSSWATFD) is disordered. The segment covering 206–232 (KNENFSSEVNQNRRTTIAPPSSWATFD) has biased composition (polar residues).

In terms of biological role, GTPase-activating protein (GAP) for ADP ribosylation factor (ARF). The protein is Probable ADP-ribosylation factor GTPase-activating protein AGD15 (AGD15) of Arabidopsis thaliana (Mouse-ear cress).